The following is a 983-amino-acid chain: Protein translocase subunit SecA (983 aa).

ATP-binding positions include Gln-83, 101 to 105 (GEGKT), and Asp-489. A disordered region spans residues 948–983 (ISSEEEDNNEKTNINNNEDLERTKGEAQQTAKNPNE). Residues 973-983 (EAQQTAKNPNE) show a composition bias toward polar residues.

It belongs to the SecA family. In terms of assembly, monomer and homodimer. Part of the essential Sec protein translocation apparatus which comprises SecA, SecYEG and auxiliary proteins SecDF. Other proteins may also be involved.

Its subcellular location is the cell membrane. The protein resides in the cytoplasm. The enzyme catalyses ATP + H2O + cellular proteinSide 1 = ADP + phosphate + cellular proteinSide 2.. Part of the Sec protein translocase complex. Interacts with the SecYEG preprotein conducting channel. Has a central role in coupling the hydrolysis of ATP to the transfer of proteins into and across the cell membrane, serving as an ATP-driven molecular motor driving the stepwise translocation of polypeptide chains across the membrane. The sequence is that of Protein translocase subunit SecA from Mesomycoplasma hyopneumoniae (strain J / ATCC 25934 / NCTC 10110) (Mycoplasma hyopneumoniae).